Here is a 2209-residue protein sequence, read N- to C-terminus: Orsellinic acid synthase armB (2209 aa).

The N-terminal acylcarrier protein transacylase domain (SAT) stretch occupies residues 38–261 (LLLDACYYAF…HKTTVDALYH (224 aa)). The Ketosynthase family 3 (KS3) domain maps to 391–817 (QEPIAICGMS…GSNGALLLEE (427 aa)). Active-site for beta-ketoacyl synthase activity residues include Cys561, His696, and His736. The malonyl-CoA:ACP transacylase (MAT) domain stretch occupies residues 914-1239 (VFVFSGQGGQ…NLTLSSSLSQ (326 aa)). The active-site For acyl/malonyl transferase activity is Ser1008. Residues 1306–1436 (MLQSWAQFPS…GQFRPLLVAD (131 aa)) form an N-terminal hotdog fold region. Positions 1306-1613 (MLQSWAQFPS…FKKLRLNTLQ (308 aa)) constitute a PKS/mFAS DH domain. The segment at 1335–1610 (ITGHIVGDVP…GMCFKKLRLN (276 aa)) is product template (PT) domain. Catalysis depends on His1338, which acts as the Proton acceptor; for dehydratase activity. A C-terminal hotdog fold region spans residues 1463 to 1613 (AEVITTRTAY…FKKLRLNTLQ (151 aa)). The active-site Proton donor; for dehydratase activity is Asp1524. Carrier domains follow at residues 1659–1734 (VDVQ…SSTI) and 1844–1921 (SSSS…SSKQ). Residues Ser1693 and Ser1881 each carry the O-(pantetheine 4'-phosphoryl)serine modification. Residues 1917–1945 (ISSKQPGKSPKPSEEATMDPDKEEDLSDL) are disordered. Over residues 1932–1943 (ATMDPDKEEDLS) the composition is skewed to acidic residues. The tract at residues 1962-2201 (VPMSVQKSSS…LGAVTQALVD (240 aa)) is thioesterase (TE) domain.

It catalyses the reaction 3 malonyl-CoA + acetyl-CoA + 2 H(+) = orsellinate + 3 CO2 + 4 CoA. The protein operates within secondary metabolite biosynthesis. Its function is as follows. Non-reducing polyketide synthase, part of the gene cluster that mediates the biosynthesis of melleolides, a range of antifungal and phytotoxic polyketide derivatives composed of an orsellinic acid (OA) moiety esterified to various sesquiterpene alcohols. The first step in melleolides biosynthesis is performed by the delta(6)-protoilludene synthase PRO1 which catalyzes the cyclization of farnesyl diphosphate to protoilludene. The orsellinic acid synthase armB produces OA by condensing acetyl-CoA with 3 malonyl-CoA units in a three-round chain elongation reaction folowed by a C2-C7 ring closure. ArmB further catalyzes the trans-esterification of OA to the various sesquiterpene alcohols resulting from the hydroxylation of protoilludene. The melleolides cluster also includes 5 cytochrome P450 monooxygenases, 4 NAD(+)-dependent oxidoreductases, one flavin-dependent oxidoreductase, and one O-methyltransferase. The cytochrome P450 monooxygenases may be involved in protoilludene hydroxylation to elaborate melleolides with multiple alcohol groups, such as melleolide D, which carries alcohol functionalities at C-4, C-5, C-10, and C-13. The role of the NAD(+)-dependent enzymes remains unknown. Numerous melleolides, including arnamial, show 5'-O-methylation of the aromatic moiety which may be catalyzed by the methyltransferase encoded in the cluster. The flavin-dependent oxidoreductase might represent the dehydrogenase yielding the aldehyde in position 1 of arnamial and other melleolides. Finally, several halogenase localized outside of the cluster (armH1 to armH5), are able to catalyze the transfer of a single chlorine atom to the melleolide backbone, resulting in a 6'-chloromelleolide product. This chain is Orsellinic acid synthase armB, found in Armillaria mellea (Honey mushroom).